Consider the following 90-residue polypeptide: DNA-directed RNA polymerase subunit Rpo5 (90 aa).

It belongs to the archaeal Rpo5/eukaryotic RPB5 RNA polymerase subunit family. In terms of assembly, part of the RNA polymerase complex.

It is found in the cytoplasm. The enzyme catalyses RNA(n) + a ribonucleoside 5'-triphosphate = RNA(n+1) + diphosphate. Its function is as follows. DNA-dependent RNA polymerase (RNAP) catalyzes the transcription of DNA into RNA using the four ribonucleoside triphosphates as substrates. The protein is DNA-directed RNA polymerase subunit Rpo5 of Aeropyrum pernix (strain ATCC 700893 / DSM 11879 / JCM 9820 / NBRC 100138 / K1).